The sequence spans 198 residues: Auxin-binding protein 1 (198 aa).

An N-terminal signal peptide occupies residues 1–33 (MIVLSVGSASSSPIVVVFSVALLLFYFSETSLG). A disulfide bond links Cys36 and Cys189. Residues His92, His94, and Glu98 each contribute to the Zn(2+) site. N-linked (GlcNAc...) asparagine glycosylation occurs at Asn130. His141 lines the Zn(2+) pocket. Residues 195–198 (KDEL) carry the Prevents secretion from ER motif.

In terms of assembly, homodimer. May interact with the GPI-anchored plasma membrane protein SKU5 and its family members. Interacts with TMK1 (via extracellular domain). Glycosylated. Post-translationally, ubiquitinated by RMA2, leading to proteasomal degradation.

It localises to the endoplasmic reticulum lumen. Its subcellular location is the cell membrane. Functionally, auxin receptor that controls cell elongation and cell division. Involved in embryonic morphogenesis. Acts on the cell cycle, endocycle, cell plate formation, and cell expansion and contributes to the control of auxin-related gene expression. Controls root meristem size and mediates auxin responsiveness. Involved in activation of ROP GTPases in response to auxin and regulation of clathrin-mediated endocytosis in roots. Acts as a positive factor in clathrin recruitment to the plasma membrane, thereby promoting endocytosis. Upon auxin binding, restricts the internalization of PIN proteins by inhibiting clathrin-mediated endocytosis. Promotes auxin-triggered phosphorylation status modulation of RAF-like kinases (e.g. RAF20 and RAF24). Involved in the regulation of polar auxin transport. Behaves as a negative regulator of the SCF(TIR1/AFB) signaling pathway, protecting AUX/IAA repressors from degradation. Regulates the expression of cell wall remodeling genes via an SCF(TIR1/AFB)-dependent pathway. Involved in the modulation of hemicellulose xyloglucan structure. Required for rapid auxin-mediated re-orientation of microtubules to regulate cell elongation in roots and dark-grown hypocotyls as well as asymmetric growth during gravitropic responses. Involved in the shade avoidance response. Forms with TMK1 a cell surface auxin perception complex that activates ROP signaling pathways. ABP1 sensing of auxin is important for the ABP1-TMK1 complex formation. Interacts functionally with phytochrome to regulate growth. The protein is Auxin-binding protein 1 of Arabidopsis thaliana (Mouse-ear cress).